The chain runs to 973 residues: MARQYSRTNPLGFTPWPVTIITALVYLALVIPLLVVQHVVPSAPGSDPAGLNLTEAWADLQVLTNGFHPYNSHRNDDVHKWLLQRVHEIIDSAPARSTDSAHPPAVFVFDDDQSNLTFSGRGNELGVYFESTNILVYIRGTEDDETQWWADPQGQPASKGGVLVNAHYDSVSTGYGATDDGMGVVSCLQLLRYFTTPGHAPRRGLVVLLNNGEEDFLNGARVYSQHPLSRLPHTFVNLEGAGAGGRASLFRSSDTEVTRPYARAPHPFGSVLSANGFEAGLISSQTDYVVLEGDLGLRGLDIAFIEPRARYHTDQDDARHTSVDSLWHMLSAAVATTEGLVDDASDQFDGAPREDGKVASGSGSKAVWFDLFGSTLAVFELHTLFALSVTLLIVAPLVLLATSIALVRADRMYLFRSTARVPGSDDFDEGVSLQGVRGFFRFPFLLVIPTGVAVGLAYLVTKINPYIIHSSEYAVWSMMISAWVFLAWFVSRVADFARPSAFHRVYVLTWMFVAEWVLLVIATVYENRYGLAGGYFVFFALSGTFLATWISYLELFALPRKSEYARQIAPPSRYASNHGSRLGTSSGEHGMDDAEDEEDDDGDDEDEARNVEEEPTESTSLLRGRGQRTTFANYVRVTGDYLHGAGDDEPRETHVYGREQAWSAGLPKWTWVLQFLLSAPIVLILVGPLALLLTAALRQTAQDGSSPLFVYIAIAVLTTLLVTPLLPFIHRYTHHIPLFLLLVFTGTLIYNLVAFPFSPSNRLKLFFLQEVDLDTGVNRAFLSGAHPFVYEVARSLPSAAGQNVSCDLSAARPKCSWYGIPPQVQATATPDTADWVSFNITRSADQPTRARFSVAGQNTRACRLVFDDPVRSFAVLDSAYDPRFPHLSPQGTQEIRLWSREWGHTWTVDVEWTVPAVDGESRGVSGRVVCLWSDGNAPGVIPALDEVRRYSPVWTAVSKLSDGLVEGSRRFEV.

The Cytoplasmic segment spans residues 1–15; that stretch reads MARQYSRTNPLGFTP. The helical transmembrane segment at 16-36 threads the bilayer; that stretch reads WPVTIITALVYLALVIPLLVV. The Vacuolar portion of the chain corresponds to 37 to 383; that stretch reads QHVVPSAPGS…STLAVFELHT (347 aa). N-linked (GlcNAc...) asparagine glycans are attached at residues Asn52 and Asn115. Zn(2+) is bound by residues His167 and Asp179. Residue Glu213 is the Proton acceptor of the active site. Zn(2+)-binding residues include Glu214, Glu239, and His312. The helical transmembrane segment at 384–404 threads the bilayer; that stretch reads LFALSVTLLIVAPLVLLATSI. The Cytoplasmic portion of the chain corresponds to 405-438; that stretch reads ALVRADRMYLFRSTARVPGSDDFDEGVSLQGVRG. The helical transmembrane segment at 439–459 threads the bilayer; it reads FFRFPFLLVIPTGVAVGLAYL. At 460-469 the chain is on the vacuolar side; the sequence is VTKINPYIIH. The chain crosses the membrane as a helical span at residues 470-490; sequence SSEYAVWSMMISAWVFLAWFV. At 491–504 the chain is on the cytoplasmic side; that stretch reads SRVADFARPSAFHR. Residues 505 to 525 traverse the membrane as a helical segment; sequence VYVLTWMFVAEWVLLVIATVY. The Vacuolar portion of the chain corresponds to 526-529; sequence ENRY. The helical transmembrane segment at 530–550 threads the bilayer; that stretch reads GLAGGYFVFFALSGTFLATWI. Residues 551-674 are Cytoplasmic-facing; it reads SYLELFALPR…GLPKWTWVLQ (124 aa). Positions 572-623 are disordered; sequence SRYASNHGSRLGTSSGEHGMDDAEDEEDDDGDDEDEARNVEEEPTESTSLLR. Over residues 574 to 587 the composition is skewed to polar residues; the sequence is YASNHGSRLGTSSG. The segment covering 593–607 has biased composition (acidic residues); it reads DAEDEEDDDGDDEDE. The helical transmembrane segment at 675-695 threads the bilayer; it reads FLLSAPIVLILVGPLALLLTA. The Vacuolar segment spans residues 696-708; that stretch reads ALRQTAQDGSSPL. The helical transmembrane segment at 709–729 threads the bilayer; it reads FVYIAIAVLTTLLVTPLLPFI. The Cytoplasmic segment spans residues 730–735; the sequence is HRYTHH. The helical transmembrane segment at 736-756 threads the bilayer; the sequence is IPLFLLLVFTGTLIYNLVAFP. The Vacuolar portion of the chain corresponds to 757 to 973; that stretch reads FSPSNRLKLF…LVEGSRRFEV (217 aa). Asn803 and Asn839 each carry an N-linked (GlcNAc...) asparagine glycan.

This sequence belongs to the peptidase M28 family. Zn(2+) serves as cofactor.

Its subcellular location is the vacuole membrane. In terms of biological role, may be involved in vacuolar sorting and osmoregulation. This is Vacuolar membrane protease from Aspergillus clavatus (strain ATCC 1007 / CBS 513.65 / DSM 816 / NCTC 3887 / NRRL 1 / QM 1276 / 107).